The sequence spans 600 residues: ATP-dependent ubiquitin transferase-like protein Cap2 (600 aa).

An E2-like domain region spans residues 1–158 (MSTVVQQVPA…QEKLATTGDA (158 aa)). C109 functions as the For E2-like domain in the catalytic mechanism. Positions 159–373 (VELPAFPDQS…DQLRTRGEAA (215 aa)) are linker domain. An adenylation plus E1-like domain region spans residues 375–600 (DIRSKKVLII…GTVEKEPHEY (226 aa)). C548 (for E1-like domain) is an active-site residue.

This sequence in the C-terminal section; belongs to the HesA/MoeB/ThiF family. Crystallizes as a Cap2 homodimer bound on each side by a CdnD monomer.

Its function is as follows. CD-NTase priming component of a CBASS antiviral system. CBASS (cyclic oligonucleotide-based antiphage signaling system) provides immunity against bacteriophages. The CD-NTase protein (CdnD) synthesizes cyclic nucleotides in response to infection; these serve as specific second messenger signals. The signals activate a diverse range of effectors, leading to bacterial cell death and thus abortive phage infection. A type II-C(AAG) CBASS system. Functionally, primes CdnD; acts as a protein transferase, conjugating CdnD, the CD-NTase, to unidentified target(s) in the cell via an E1-E2 ubiquitin transferase-like mechanism. Upon phage infection CdnD activates and makes cyclic nucleotides. During the conjugation reaction CdnD is transiently attached to AMP. Protein conjugation requires ATP. In terms of biological role, protects E.coli against phage T2 infection. When the cdnD-cap2-cap3-cap4 operon is introduced in E.coli there is a more than 10(3) decrease in the efficiency of T2 plaque formation. The operon does not protect against phage T5 and only about 10-fold against T7. This Enterobacter hormaechei subsp. hoffmannii (strain UCI 50) protein is ATP-dependent ubiquitin transferase-like protein Cap2.